We begin with the raw amino-acid sequence, 312 residues long: HTH-type transcriptional regulator PtxR (312 aa).

Residues 11-68 (LNLNHLYAFVAVAEHNSFTAAAEALGLSKSLLSEQLRRLEADLGIQLLTRTTRRMTLT) enclose the HTH lysR-type domain. The H-T-H motif DNA-binding region spans 28 to 47 (FTAAAEALGLSKSLLSEQLR).

This sequence belongs to the LysR transcriptional regulatory family. In terms of assembly, monomer in solution. May dimerize on binding to DNA. Interacts with PtxS in the absence of 2-ketogluconate. Binding of the 2-ketogluconate effector to PtxS causes PtxS/PtxR complex dissociation.

Negatively regulated by PtxS, which interacts with PtxR and prevents its activity. In terms of biological role, plays an important role in the regulation of the production of the virulence factor exotoxin A (toxA), via positive regulation of the transcription of the toxA gene. Acts by binding directly to the toxA promoter region. Besides toxA, PtxR modulates the expression of genes that code for the QS-controlled virulence factors. It negatively regulates the expression of the rhamnolipid and pyocyanine genes, through the autoinducer synthase RhlI, and the PQS synthesis operon pqsABCDE, while it positively regulates the expression of lasB through the autoinducer synthase LasI. Also positively regulates the expression of the exotoxin A regulatory protein (toxR or regA). Functionally, in addition, is involved in the positive regulation of glucose metabolism via the regulation of the expression of the kgu and gad operons. Acts by binding directly to the promoter region of the kgu and gad operons. This chain is HTH-type transcriptional regulator PtxR, found in Pseudomonas aeruginosa (strain ATCC 15692 / DSM 22644 / CIP 104116 / JCM 14847 / LMG 12228 / 1C / PRS 101 / PAO1).